The chain runs to 191 residues: NAD(P)H-dependent FMN reductase LOT6 (191 aa).

Residues R11, 94–97 (QYNW), and Y124 each bind FMN.

Homodimer.

Its subcellular location is the cytoplasm. The protein localises to the nucleus. The enzyme catalyses FMNH2 + NADP(+) = FMN + NADPH + 2 H(+). It carries out the reaction FMNH2 + NAD(+) = FMN + NADH + 2 H(+). Functionally, has several reductase activities that are NAD(P)H-dependent and involve FMN as a cofactor, ferricyanide being the best substrate for reduction. May be involved in ferric iron assimilation. This Saccharomyces cerevisiae (strain ATCC 204508 / S288c) (Baker's yeast) protein is NAD(P)H-dependent FMN reductase LOT6 (LOT6).